Reading from the N-terminus, the 800-residue chain is Transducin beta-like protein 3 (800 aa).

An N-acetylalanine modification is found at alanine 2. 13 WD repeats span residues 64-105, 107-146, 149-190, 193-232, 245-284, 290-329, 332-372, 374-413, 419-459, 477-516, 519-560, 562-602, and 604-642; these read EDQE…RLWK, IHTA…GTHH, GSPG…CLAV, AHYS…ATRT, LPEE…CVHA, GPGR…LRKQ, GYSE…CQIL, GHTD…EVAC, GHTH…LSKG, CHDK…LLGT, GHRR…KTFE, HDAS…RTLD, and HEDK…EQAE. Serine 257 bears the Phosphoserine mark. A Glycyl lysine isopeptide (Lys-Gly) (interchain with G-Cter in SUMO2) cross-link involves residue lysine 407.

As to quaternary structure, part of the small subunit (SSU) processome, composed of more than 70 proteins and the RNA chaperone small nucleolar RNA (snoRNA) U3.

The protein resides in the nucleus. Its subcellular location is the nucleolus. Functionally, part of the small subunit (SSU) processome, first precursor of the small eukaryotic ribosomal subunit. During the assembly of the SSU processome in the nucleolus, many ribosome biogenesis factors, an RNA chaperone and ribosomal proteins associate with the nascent pre-rRNA and work in concert to generate RNA folding, modifications, rearrangements and cleavage as well as targeted degradation of pre-ribosomal RNA by the RNA exosome. The sequence is that of Transducin beta-like protein 3 (TBL3) from Bos taurus (Bovine).